The sequence spans 493 residues: GTPase Der (493 aa).

The EngA-type G 1 domain maps to 3–166; the sequence is PVIALVGRPN…EALGIFPKDN (164 aa). Residues 9–16, 56–60, and 118–121 contribute to the GTP site; these read GRPNVGKS, DTGGI, and NKVD. The disordered stretch occupies residues 166-195; sequence NAEEEGEGEPASEEVAEGEEPTRIPGPSEK. Residues 167–184 are compositionally biased toward acidic residues; the sequence is AEEEGEGEPASEEVAEGE. Residues 198 to 371 enclose the EngA-type G 2 domain; that stretch reads IKIAIIGRPN…SVQESFRSAV (174 aa). GTP is bound by residues 204 to 211, 251 to 255, and 316 to 319; these read GRPNVGKS, DTAGV, and NKWD. The region spanning 372–456 is the KH-like domain; it reads TRWPTSRLTS…PIRIEYKGGE (85 aa). Residues 454–463 show a composition bias toward basic and acidic residues; that stretch reads GGENPYEGKK. A disordered region spans residues 454-493; sequence GGENPYEGKKNSLTARQVNKKRRLMSHHKKAEKKKKDKRR. A compositionally biased stretch (basic residues) spans 471–493; that stretch reads VNKKRRLMSHHKKAEKKKKDKRR.

Belongs to the TRAFAC class TrmE-Era-EngA-EngB-Septin-like GTPase superfamily. EngA (Der) GTPase family. As to quaternary structure, associates with the 50S ribosomal subunit.

In terms of biological role, GTPase that plays an essential role in the late steps of ribosome biogenesis. This Pseudomonas aeruginosa (strain UCBPP-PA14) protein is GTPase Der.